Here is a 240-residue protein sequence, read N- to C-terminus: 4-hydroxy-tetrahydrodipicolinate reductase (240 aa).

NAD(+) contacts are provided by residues 79–81 (ATT) and 103–106 (SANM). The active-site Proton donor/acceptor is the His-135. (S)-2,3,4,5-tetrahydrodipicolinate is bound at residue His-136. The active-site Proton donor is Lys-139. (S)-2,3,4,5-tetrahydrodipicolinate is bound at residue 145-146 (GT).

The protein belongs to the DapB family.

Its subcellular location is the cytoplasm. The enzyme catalyses (S)-2,3,4,5-tetrahydrodipicolinate + NAD(+) + H2O = (2S,4S)-4-hydroxy-2,3,4,5-tetrahydrodipicolinate + NADH + H(+). It carries out the reaction (S)-2,3,4,5-tetrahydrodipicolinate + NADP(+) + H2O = (2S,4S)-4-hydroxy-2,3,4,5-tetrahydrodipicolinate + NADPH + H(+). It functions in the pathway amino-acid biosynthesis; L-lysine biosynthesis via DAP pathway; (S)-tetrahydrodipicolinate from L-aspartate: step 4/4. In terms of biological role, catalyzes the conversion of 4-hydroxy-tetrahydrodipicolinate (HTPA) to tetrahydrodipicolinate. The sequence is that of 4-hydroxy-tetrahydrodipicolinate reductase from Staphylococcus saprophyticus subsp. saprophyticus (strain ATCC 15305 / DSM 20229 / NCIMB 8711 / NCTC 7292 / S-41).